Consider the following 276-residue polypeptide: NH(3)-dependent NAD(+) synthetase (276 aa).

Residue 43–50 coordinates ATP; that stretch reads GISGGVDS. D49 is a Mg(2+) binding site. R146 contacts deamido-NAD(+). T166 provides a ligand contact to ATP. Residue E171 participates in Mg(2+) binding. Residues K179 and D186 each coordinate deamido-NAD(+). The ATP site is built by K195 and T217. Residue 266-267 participates in deamido-NAD(+) binding; sequence HK.

The protein belongs to the NAD synthetase family. In terms of assembly, homodimer.

It catalyses the reaction deamido-NAD(+) + NH4(+) + ATP = AMP + diphosphate + NAD(+) + H(+). It functions in the pathway cofactor biosynthesis; NAD(+) biosynthesis; NAD(+) from deamido-NAD(+) (ammonia route): step 1/1. Catalyzes the ATP-dependent amidation of deamido-NAD to form NAD. Uses ammonia as a nitrogen source. The chain is NH(3)-dependent NAD(+) synthetase from Shewanella baltica (strain OS223).